Reading from the N-terminus, the 230-residue chain is Ly6/PLAUR domain-containing protein 8 (230 aa).

The first 20 residues, Met1–Thr20, serve as a signal peptide directing secretion. N-linked (GlcNAc...) asparagine glycans are attached at residues Asn37, Asn44, Asn74, Asn77, Asn90, Asn106, Asn110, Asn132, Asn137, Asn156, Asn168, Asn181, and Asn197. The region spanning Cys125–Ser172 is the UPAR/Ly6 domain. Residue Ser211 is the site of GPI-anchor amidated serine attachment. Positions Gln212–Leu230 are cleaved as a propeptide — removed in mature form.

The protein belongs to the CNF-like-inhibitor family. Post-translationally, highly N-glycosylated. Not O-glycosylated. GPI-anchored. The GPI-anchor is cleaved, leading to secretion into the colonic lumen.

It is found in the cell membrane. It localises to the secreted. Its function is as follows. Secreted protein specifically required to prevent invasion of Gram-negative bacteria in the inner mucus layer of the colon epithelium, a portion of the large intestine which is free of commensal microbiota. Prevents invasion of flagellated microbiota by binding to the flagellum of bacteria, such as P.mirabilis, thereby inhibiting bacterial motility in the intestinal lumen. Segregation of intestinal bacteria and epithelial cells in the colon is required to preserve intestinal homeostasis. The sequence is that of Ly6/PLAUR domain-containing protein 8 (LYPD8) from Bos taurus (Bovine).